The following is a 393-amino-acid chain: Myb-related transcription factor, partner of profilin (393 aa).

Over residues 1-11 (MASATAAAAPG) the composition is skewed to low complexity. The segment at 1-21 (MASATAAAAPGEAEETTRLRK) is disordered. The 73-residue stretch at 16-88 (TTRLRKPRFS…EVQKRWNDFK (73 aa)) folds into the Myb-like domain. The Nuclear localization signal motif lies at 87-90 (FKRR). Disordered stretches follow at residues 125 to 254 (GPGV…EQSL), 290 to 323 (PLLP…APKV), and 348 to 393 (IISP…WKSP). Positions 142 to 157 (AAASSQPQASTASTQR) are enriched in low complexity. The span at 160–171 (LSEDRRQDRRAD) shows a compositional bias: basic and acidic residues. Over residues 173–184 (PAQSKGGSSSPE) the composition is skewed to polar residues. 4 stretches are compositionally biased toward pro residues: residues 219–229 (PPLPAPPPPPT), 238–247 (SPSPTPPRPT), 296–320 (PADP…PPSA), and 359–368 (KPLPPAPPLP). Residues 375–393 (HKRRKGFPTRKRRGRWKSP) are compositionally biased toward basic residues. Short sequence motifs (nuclear localization signal) lie at residues 376 to 379 (KRRK) and 384 to 387 (RKRR).

As to quaternary structure, interacts with PFN1. Homodimer and heterodimer with PFN1. In terms of tissue distribution, ubiquitous. Highly expressed in brain, liver and testis. Moderate expression in heart, lung and skeletal muscle. Low expression in spleen and kidney.

The protein localises to the nucleus. Functionally, transcriptional repressor; DNA-binding protein that specifically recognizes the core sequence 5'-YAAC[GT]G-3'. Dimerization with PFN1 reduces its DNA-binding capacity. The protein is Myb-related transcription factor, partner of profilin (Mypop) of Mus musculus (Mouse).